The sequence spans 360 residues: Probable dual-specificity RNA methyltransferase RlmN (360 aa).

E97 (proton acceptor) is an active-site residue. Positions 103 to 330 constitute a Radical SAM core domain; it reads DGDRLTFCIS…TAVRRSRGLD (228 aa). C110 and C335 are oxidised to a cystine. [4Fe-4S] cluster contacts are provided by C117, C121, and C124. S-adenosyl-L-methionine contacts are provided by residues 165 to 166, S197, 220 to 222, and H292; these read GE and SIH. The active-site S-methylcysteine intermediate is the C335.

Belongs to the radical SAM superfamily. RlmN family. [4Fe-4S] cluster serves as cofactor.

It is found in the cytoplasm. The enzyme catalyses adenosine(2503) in 23S rRNA + 2 reduced [2Fe-2S]-[ferredoxin] + 2 S-adenosyl-L-methionine = 2-methyladenosine(2503) in 23S rRNA + 5'-deoxyadenosine + L-methionine + 2 oxidized [2Fe-2S]-[ferredoxin] + S-adenosyl-L-homocysteine. It carries out the reaction adenosine(37) in tRNA + 2 reduced [2Fe-2S]-[ferredoxin] + 2 S-adenosyl-L-methionine = 2-methyladenosine(37) in tRNA + 5'-deoxyadenosine + L-methionine + 2 oxidized [2Fe-2S]-[ferredoxin] + S-adenosyl-L-homocysteine. Its function is as follows. Specifically methylates position 2 of adenine 2503 in 23S rRNA and position 2 of adenine 37 in tRNAs. This chain is Probable dual-specificity RNA methyltransferase RlmN, found in Gemmatimonas aurantiaca (strain DSM 14586 / JCM 11422 / NBRC 100505 / T-27).